The following is a 178-amino-acid chain: Large ribosomal subunit protein uL6 (178 aa).

The protein belongs to the universal ribosomal protein uL6 family. In terms of assembly, part of the 50S ribosomal subunit.

This protein binds to the 23S rRNA, and is important in its secondary structure. It is located near the subunit interface in the base of the L7/L12 stalk, and near the tRNA binding site of the peptidyltransferase center. The sequence is that of Large ribosomal subunit protein uL6 from Limosilactobacillus fermentum (strain NBRC 3956 / LMG 18251) (Lactobacillus fermentum).